Consider the following 570-residue polypeptide: Sulfite reductase [NADPH] hemoprotein beta-component (570 aa).

Cys-434, Cys-440, Cys-479, and Cys-483 together coordinate [4Fe-4S] cluster. Residue Cys-483 participates in siroheme binding.

Belongs to the nitrite and sulfite reductase 4Fe-4S domain family. As to quaternary structure, alpha(8)-beta(8). The alpha component is a flavoprotein, the beta component is a hemoprotein. Siroheme serves as cofactor. Requires [4Fe-4S] cluster as cofactor.

It carries out the reaction hydrogen sulfide + 3 NADP(+) + 3 H2O = sulfite + 3 NADPH + 4 H(+). The protein operates within sulfur metabolism; hydrogen sulfide biosynthesis; hydrogen sulfide from sulfite (NADPH route): step 1/1. Component of the sulfite reductase complex that catalyzes the 6-electron reduction of sulfite to sulfide. This is one of several activities required for the biosynthesis of L-cysteine from sulfate. This is Sulfite reductase [NADPH] hemoprotein beta-component from Escherichia coli O7:K1 (strain IAI39 / ExPEC).